The chain runs to 572 residues: Cytochrome P450 monooxygenase xilC (572 aa).

Residue C515 coordinates heme.

It belongs to the cytochrome P450 family. Heme is required as a cofactor.

It participates in secondary metabolite biosynthesis. Its function is as follows. Cytochrome P450 monooxygenase; part of the gene cluster that mediates the biosynthesis of the 6-methyl-2-pyrone derivative xylariolide D. XilC hydroxylates the 5-alkyl-6-methyl-2-pyrone backbone called prexylariolide D, produced by the highly reducing polyketide synthase xilA, on its side chain to form xylariolide D. The chain is Cytochrome P450 monooxygenase xilC from Penicillium rubens (strain ATCC 28089 / DSM 1075 / NRRL 1951 / Wisconsin 54-1255) (Penicillium chrysogenum).